The sequence spans 163 residues: Putative pre-16S rRNA nuclease (163 aa).

It belongs to the YqgF nuclease family.

Its subcellular location is the cytoplasm. In terms of biological role, could be a nuclease involved in processing of the 5'-end of pre-16S rRNA. In Zymomonas mobilis subsp. mobilis (strain ATCC 31821 / ZM4 / CP4), this protein is Putative pre-16S rRNA nuclease.